The sequence spans 367 residues: Glutamate 5-kinase (367 aa).

Residue lysine 8 participates in ATP binding. Residues serine 49, aspartate 136, and asparagine 148 each contribute to the substrate site. ATP contacts are provided by residues 168 to 169 (TD) and 210 to 216 (TGGMATK). Residues 275–353 (TGKLYLDRGA…EEIPTILGYS (79 aa)) form the PUA domain.

This sequence belongs to the glutamate 5-kinase family.

Its subcellular location is the cytoplasm. The catalysed reaction is L-glutamate + ATP = L-glutamyl 5-phosphate + ADP. Its pathway is amino-acid biosynthesis; L-proline biosynthesis; L-glutamate 5-semialdehyde from L-glutamate: step 1/2. Functionally, catalyzes the transfer of a phosphate group to glutamate to form L-glutamate 5-phosphate. In Cyanothece sp. (strain PCC 7425 / ATCC 29141), this protein is Glutamate 5-kinase.